The chain runs to 148 residues: SsrA-binding protein (148 aa).

Residues 119–148 form a disordered region; the sequence is AKGKKQHDKRQSMKEADWKREKQRLIKHTR. The span at 127-142 shows a compositional bias: basic and acidic residues; that stretch reads KRQSMKEADWKREKQR.

Belongs to the SmpB family.

The protein resides in the cytoplasm. Its function is as follows. Required for rescue of stalled ribosomes mediated by trans-translation. Binds to transfer-messenger RNA (tmRNA), required for stable association of tmRNA with ribosomes. tmRNA and SmpB together mimic tRNA shape, replacing the anticodon stem-loop with SmpB. tmRNA is encoded by the ssrA gene; the 2 termini fold to resemble tRNA(Ala) and it encodes a 'tag peptide', a short internal open reading frame. During trans-translation Ala-aminoacylated tmRNA acts like a tRNA, entering the A-site of stalled ribosomes, displacing the stalled mRNA. The ribosome then switches to translate the ORF on the tmRNA; the nascent peptide is terminated with the 'tag peptide' encoded by the tmRNA and targeted for degradation. The ribosome is freed to recommence translation, which seems to be the essential function of trans-translation. The chain is SsrA-binding protein from Neisseria meningitidis serogroup C (strain 053442).